The following is a 172-amino-acid chain: Translationally-controlled tumor protein homolog (172 aa).

The region spanning 1-172 is the TCTP domain; that stretch reads MIIYKDTVTE…FKDGLISEKC (172 aa).

This sequence belongs to the TCTP family.

It is found in the cytoplasm. Its function is as follows. Involved in calcium binding and microtubule stabilization. The polypeptide is Translationally-controlled tumor protein homolog (tpt1) (Xenopus tropicalis (Western clawed frog)).